The following is a 446-amino-acid chain: Maltoporin (446 aa).

Positions 1–25 (MMITLRKLPLAVAVAAGVMSAQAMA) are cleaved as a signal peptide.

This sequence belongs to the porin LamB (TC 1.B.3) family. As to quaternary structure, homotrimer formed of three 18-stranded antiparallel beta-barrels, containing three independent channels.

It localises to the cell outer membrane. The enzyme catalyses beta-maltose(in) = beta-maltose(out). Involved in the transport of maltose and maltodextrins. This chain is Maltoporin, found in Escherichia coli O6:K15:H31 (strain 536 / UPEC).